We begin with the raw amino-acid sequence, 433 residues long: Serine hydroxymethyltransferase (433 aa).

Residue 121 to 123 (AHV) participates in (6S)-5,6,7,8-tetrahydrofolate binding. An N6-(pyridoxal phosphate)lysine modification is found at Lys227. Glu243 lines the (6S)-5,6,7,8-tetrahydrofolate pocket.

This sequence belongs to the SHMT family. As to quaternary structure, homodimer. Pyridoxal 5'-phosphate serves as cofactor.

Its subcellular location is the cytoplasm. The protein operates within amino-acid biosynthesis; glycine biosynthesis; glycine from L-serine: step 1/1. Catalyzes the reversible interconversion of serine and glycine with a modified folate serving as the one-carbon carrier. Also exhibits a pteridine-independent aldolase activity toward beta-hydroxyamino acids, producing glycine and aldehydes, via a retro-aldol mechanism. The polypeptide is Serine hydroxymethyltransferase (Saccharolobus islandicus (strain Y.N.15.51 / Yellowstone #2) (Sulfolobus islandicus)).